Consider the following 651-residue polypeptide: Probable ATP-dependent helicase MJ0942 (651 aa).

Residues 6–255 enclose the Helicase ATP-binding domain; sequence YIKEKFPYPK…EIIEKYLTSR (250 aa). Residue 41-48 coordinates ATP; that stretch reads APTGVGKT. Residues C102, C149, and C154 each contribute to the [4Fe-4S] cluster site. The DEAH box motif lies at 195–198; that stretch reads DEAH. Positions 449–638 constitute a Helicase C-terminal domain; that stretch reads NLLKILEAIN…NYEVMSLDMA (190 aa).

The protein belongs to the helicase family. DinG subfamily. [4Fe-4S] cluster serves as cofactor.

It catalyses the reaction Couples ATP hydrolysis with the unwinding of duplex DNA at the replication fork by translocating in the 5'-3' direction. This creates two antiparallel DNA single strands (ssDNA). The leading ssDNA polymer is the template for DNA polymerase III holoenzyme which synthesizes a continuous strand.. It carries out the reaction ATP + H2O = ADP + phosphate + H(+). Functionally, might be a 5'-3' DNA helicase. The polypeptide is Probable ATP-dependent helicase MJ0942 (Methanocaldococcus jannaschii (strain ATCC 43067 / DSM 2661 / JAL-1 / JCM 10045 / NBRC 100440) (Methanococcus jannaschii)).